The chain runs to 1021 residues: MAELPTTETPGDATLCSGRFTISTLLSSDEPSPPAAYDSSHPSHLTHSSTFCMRTFGYNTIDVVPTYEHYANSTQPGEPRKVRPTLADLHSFLKQEGRHLHALAFDSRPSHEMTDGLVEGEAGTSSEKNPEEPVRFGWVKGVMIRCMLNIWGVILYLRLPWITAQAGIVLTWIIILLSVTVTSITGLSISAISTNGKVKSGGTYFLISRSLGPELGGSIGLIFAFANAVGVAMHTVGFAETVRDLLQEYGAPIVDPINDIRIIAVVSVTVLLAISLAGMEWESKAQVLFFLVIMVSFANYLVGTLIPPSEDKASKGFFSYRADIFVQNLVPDWRGPDGTFFGMFSIFFPSATGILAGANISGDLKDPAIAIPKGTLMAIFWTTISYLAISATIGSCVVRDASGVLNDTVTPGWGACEGLACSYGWNFTECTQQHSCHYGLINYYQTMSMVSGFAPLITAGIFGATLSSALACLVSAAKVFQCLCEDQLYPLIGFFGKGYGKNKEPVRGYLLAYAIAVAFIIIAELNTIAPIISNFFLCSYALINFSCFHASITNSPGWRPSFQYYNKWAALFGAIISVVIMFLLTWWAALIAIGVVLFLLLYVIYKKPEVNWGSSVQAGSYNLALSYSVGLNEVEDHIKNYRPQCLVLTGPPNFRPALVDFVGTFTRNLSLMICGHVLIGPHKQRMPELQLIANGHTKWLNKRKIKAFYSDVIAEDLRRGVQILMQAAGLGRMKPNILVVGFKKNWQSAHPATVEDYIGILHDAFDFNYGVCVMRMREGLNVSKMMQAHINPVFDPAEDGKEASARVDPKALVKEEQATTIFQSEQGKKTIDIYWLFDDGGLTLLIPYLLGRKRRWSKCKIRVFVGGQINRMDQERKAIISLLSKFRLGFHEVHILPDINQNPRAEHTKRFEDMIAPFRLNDGFKDEATVNEMRRDCPWKISDEEITKNRVKSLRQVRLNEIVLDYSRDAALIVITLPIGRKGKCPSSLYMAWLETLSQDLRPPVILIRGNQENVLTFYCQ.

Residues Met-1–Gly-137 lie on the Cytoplasmic side of the membrane. Ser-43 carries the post-translational modification Phosphoserine. A Phosphothreonine; by OXSR1 and STK39 modification is found at Thr-46. Ser-49 carries the post-translational modification Phosphoserine. At Thr-50 the chain carries Phosphothreonine. Phosphothreonine; by OXSR1 and STK39 is present on residues Thr-55 and Thr-60. Ser-73 carries the phosphoserine modification. Phosphoserine; by OXSR1 and STK39 is present on Ser-91. Thr-124 carries the post-translational modification Phosphothreonine. Ser-126 carries the post-translational modification Phosphoserine. Residues Trp-138–Gly-167 traverse the membrane as a discontinuously helical segment. Leu-148 contacts Na(+). Residue Asn-149 coordinates polythiazide. Residue Trp-151 coordinates Na(+). A helical membrane pass occupies residues Ile-168 to Ile-189. Residues Ser-190–Gly-220 are Cytoplasmic-facing. Residues Leu-221–Arg-243 form a helical membrane-spanning segment. Polythiazide contacts are provided by Asn-227 and His-234. Residues Asp-244–Asp-255 lie on the Extracellular side of the membrane. 2 consecutive transmembrane segments (helical) span residues Pro-256–Glu-280 and Trp-281–Gly-303. Over Thr-304–Gly-338 the chain is Extracellular. A discontinuously helical membrane pass occupies residues Thr-339–Ile-360. Thr-352 contacts polythiazide. Chloride is bound by residues Gly-353, Ile-354, and Leu-355. Asn-359 contacts polythiazide. Residues Ser-361–Ile-371 are Cytoplasmic-facing. The chain crosses the membrane as a helical span at residues Pro-372–Ile-393. The Extracellular segment spans residues Gly-394 to Phe-453. Residue Asn-406 is glycosylated (N-linked (GlcNAc...) asparagine). Residues Cys-416 and Cys-421 are joined by a disulfide bond. Residue Asn-426 is glycosylated (N-linked (GlcNAc...) asparagine). A disulfide bridge connects residues Cys-430 and Cys-436. The helical transmembrane segment at Ala-454–Ala-477 threads the bilayer. 3 residues coordinate Na(+): Ala-464, Ser-467, and Ser-468. Residues Lys-478–Arg-507 lie on the Cytoplasmic side of the membrane. A helical transmembrane segment spans residues Gly-508–Ile-522. Residues Ala-523–Thr-527 are Extracellular-facing. Residues Ile-528–Asn-544 traverse the membrane as a helical segment. Chloride is bound at residue Tyr-540. Topologically, residues Phe-545–Lys-567 are cytoplasmic. 2 consecutive transmembrane segments (helical) span residues Trp-568–Trp-587 and Ala-588–Leu-599. Residues Leu-600–Gln-1021 are Cytoplasmic-facing. Residues Ser-615–Gly-630 are scissor helix. 6 residues coordinate ATP: Leu-648, Arg-655, Val-677, Gly-741, Leu-780, and Asn-781.

It belongs to the SLC12A transporter family. As to quaternary structure, homodimer; adopts a domain-swap conformation at the scissor helices connecting the transmembrane domain and C-terminal domain. Interacts with KLHL3. Interacts with IL18R1; this interaction is increased by IL18 treatment. Post-translationally, ubiquitinated; ubiquitination is essential for regulation of endocytosis. The BCR(KLHL3) complex was initially identified as a candidate ubiquitin ligase for SLC12A3. However, it was later shown that it is not the case. Phosphorylated at Thr-46, Thr-55, Thr-60 and Ser-91 by OXSR1/OSR1 and STK39/SPAK downstream of WNK4, promoting its activity. Phosphorylated in response to IL18. Predominantly expressed in the kidney (at protein level). Localizes to the distal convoluted tubules (at protein level). Not detected in normal aorta, but abundantly expressed in fatty streaks and advanced atherosclerotic lesions (at protein level).

The protein resides in the cell membrane. Its subcellular location is the apical cell membrane. It catalyses the reaction chloride(out) + Na(+)(out) = chloride(in) + Na(+)(in). Its activity is regulated as follows. Phosphorylation by OXSR1/OSR1 and STK39/SPAK in kidney distal convoluted tubules downstream of WNK4 promotes its activity. Also activated by OXSR1/OSR1 and STK39/SPAK downstream of WNK3. Target of thiazide diuretics used in the treatment of high blood pressure. Thiazide drugs, such as polythiazide, specifically inhibit SLC12A3/NCC transporter activity by competing with chloride for binding and by locking SLC12A3/NCC in an outward-facing conformation. Functionally, electroneutral sodium and chloride ion cotransporter, which acts as a key mediator of sodium and chloride reabsorption in kidney distal convoluted tubules. Also acts as a receptor for the pro-inflammatory cytokine IL18, thereby contributing to IL18-induced cytokine production, including IFNG, IL6, IL18 and CCL2. May act either independently of IL18R1, or in a complex with IL18R1. This is Solute carrier family 12 member 3 from Homo sapiens (Human).